The primary structure comprises 123 residues: MPTIQQLIRTERKRLTRKTKSPALRSCPERRGVCTRVYTSTPKKPNSALRKVARVRLTSGFEVTAYIPGIGHNLQEHSVVLLRGGRVKDLPGVRYHIIRGTLDTAGVKDRRQSRSKYGAKVPK.

A 3-methylthioaspartic acid modification is found at Asp89.

This sequence belongs to the universal ribosomal protein uS12 family. As to quaternary structure, part of the 30S ribosomal subunit. Contacts proteins S8 and S17. May interact with IF1 in the 30S initiation complex.

Its function is as follows. With S4 and S5 plays an important role in translational accuracy. In terms of biological role, interacts with and stabilizes bases of the 16S rRNA that are involved in tRNA selection in the A site and with the mRNA backbone. Located at the interface of the 30S and 50S subunits, it traverses the body of the 30S subunit contacting proteins on the other side and probably holding the rRNA structure together. The combined cluster of proteins S8, S12 and S17 appears to hold together the shoulder and platform of the 30S subunit. This chain is Small ribosomal subunit protein uS12, found in Prochlorococcus marinus (strain MIT 9211).